The sequence spans 186 residues: Mediator of RNA polymerase II transcription subunit 10a (186 aa).

The protein belongs to the Mediator complex subunit 10 family. As to quaternary structure, mono-, di- and oligomers. Component of the Mediator complex. Interacts with GEBPL.

The protein resides in the nucleus. Its function is as follows. Component of the Mediator complex, a coactivator involved in the regulated transcription of nearly all RNA polymerase II-dependent genes. Mediator functions as a bridge to convey information from gene-specific regulatory proteins to the basal RNA polymerase II transcription machinery. The Mediator complex, having a compact conformation in its free form, is recruited to promoters by direct interactions with regulatory proteins and serves for the assembly of a functional pre-initiation complex with RNA polymerase II and the general transcription factors. The chain is Mediator of RNA polymerase II transcription subunit 10a from Arabidopsis thaliana (Mouse-ear cress).